We begin with the raw amino-acid sequence, 124 residues long: Membrane-anchored ubiquitin-fold protein 2 (124 aa).

Positions 8–74 constitute a Ubiquitin-like domain; the sequence is LEIKFRLNDG…LENNKTVGDC (67 aa). S-palmitoyl cysteine attachment occurs at residues Cys-115, Cys-117, Cys-119, and Cys-124.

Post-translationally, acylated protein. Probably modified with palmitate. Ubiquitous, but three fold higher expression in stamens.

It localises to the cell membrane. In terms of biological role, may serve as docking site to facilitate the association of other proteins to the plasma membrane. This chain is Membrane-anchored ubiquitin-fold protein 2 (MUB2), found in Arabidopsis thaliana (Mouse-ear cress).